A 114-amino-acid polypeptide reads, in one-letter code: Amphinase-4 (114 aa).

The active-site Proton acceptor is H15. 4 disulfides stabilise this stretch: C26/C79, C41/C85, C59/C100, and C97/C114. N-linked (GlcNAc...) asparagine glycosylation is present at N27. 42 to 46 (KPVNT) contributes to the substrate binding site. N67 and N91 each carry an N-linked (GlcNAc...) asparagine glycan. H107 functions as the Proton donor in the catalytic mechanism.

Belongs to the pancreatic ribonuclease family. As to quaternary structure, monomer. Post-translationally, there are at least five different forms arising from glycan heterogeneity.

The protein resides in the secreted. Its function is as follows. Endonuclease, hydrolyzes highly polymerized RNA, poly(U) and poly(C), and the dinucleotides CpA and UpA. Hydrolyzes rCA, rUA and rUG. Has cytotoxic activity against cultured human submaxillary gland carcinoma cells. This is Amphinase-4 from Lithobates pipiens (Northern leopard frog).